Consider the following 959-residue polypeptide: Ataxin-2 homolog (959 aa).

The Sm domain maps to 13–92 (DVLSAINDMI…IVDFAYVTQE (80 aa)). 5 disordered regions span residues 203–378 (AREI…GSRV), 392–484 (TAPK…SVIT), 501–528 (PRVA…HPAM), 697–831 (PPQG…QHIQ), and 867–959 (PMQQ…QSPP). Basic and acidic residues predominate over residues 226–235 (DLDKITRQED). Residues 246–260 (NNSFNQQQQQRRNPN) show a composition bias toward low complexity. The segment covering 270-281 (RRAEGLRGDRRN) has biased composition (basic and acidic residues). Residues 282-313 (SGSSSANNSRYGAPAAAQQNYSQNQQQQQGQK) are compositionally biased toward low complexity. 2 stretches are compositionally biased toward polar residues: residues 341-356 (RQQQ…NNNV) and 473-484 (VSVTSENDSVIT). Low complexity-rich tracts occupy residues 504-528 (APAT…HPAM), 697-707 (PPQGQQQQPRY), and 715-725 (QQQQQQPQQQQ). 2 stretches are compositionally biased toward polar residues: residues 726–742 (FSGE…SQPT) and 756–765 (APQNGNMQAE). Low complexity predominate over residues 766-788 (SSSNASHSGSTSSQSGQRSGSPP). Positions 789–798 (GAVPPPPPPQ) are enriched in pro residues. Low complexity-rich tracts occupy residues 822 to 831 (MMQQQQQHIQ), 867 to 876 (PMQQNQHPQQ), and 902 to 911 (QQQQQQQQQQ). The segment covering 912 to 922 (MHRQNSLPQQF) has biased composition (polar residues). Residues 923 to 935 (QGNQGVNPSGQQS) are compositionally biased toward low complexity. A compositionally biased stretch (polar residues) spans 948-959 (TPRDQQHSQSPP).

It belongs to the ataxin-2 family. Interacts (via C-terminus) with szy-20 (via C-terminus); the interaction is RNA independent. Interacts with pab-1. Interacts with gdi-1. In terms of tissue distribution, expressed in the central nervous system, dorsal and ventral nerve cord, intestinal lining and body-wall muscle. Expressed in the gonad.

The protein localises to the cytoplasm. The protein resides in the nucleus. In terms of biological role, probable RNA-binding protein that negatively regulates the translation of targets. Functions with RNA-binding protein szy-20 to ensure embryonic cell division, and to this end, plays a role in the regulation of centrosome assembly, position and size, and in astral microtubule outgrowth and nucleation. Required for gonad development, germ cell proliferation and for the production of oocytes. Regulates whole body growth and fat accumulation in response to food availability, and this may be through the mTOR pathway, upstream of daf-15 and rheb-1. The protein is Ataxin-2 homolog of Caenorhabditis elegans.